The primary structure comprises 258 residues: Thiamine thiazole synthase (258 aa).

Residues serine 36, glutamate 55–arginine 56, glycine 63, valine 127, and histidine 153–aspartate 155 contribute to the NAD(+) site. 2 residues coordinate Fe cation: aspartate 155 and histidine 170. Residue methionine 224 coordinates NAD(+). A glycine-binding site is contributed by arginine 234.

This sequence belongs to the THI4 family. As to quaternary structure, homooctamer; tetramer of dimers. The cofactor is Fe(2+).

It carries out the reaction hydrogen sulfide + glycine + NAD(+) = ADP-5-ethyl-4-methylthiazole-2-carboxylate + nicotinamide + 3 H2O + H(+). Its pathway is cofactor biosynthesis; thiamine diphosphate biosynthesis. Its function is as follows. Involved in the biosynthesis of the thiazole moiety of thiamine. Catalyzes the conversion of NAD and glycine to adenosine diphosphate 5-(2-hydroxyethyl)-4-methylthiazole-2-carboxylate (ADT), an adenylated thiazole intermediate, using free sulfide as a source of sulfur. The sequence is that of Thiamine thiazole synthase from Desulfosudis oleivorans (strain DSM 6200 / JCM 39069 / Hxd3) (Desulfococcus oleovorans).